The primary structure comprises 326 residues: N-acetyl-gamma-glutamyl-phosphate reductase (326 aa).

C155 is a catalytic residue.

This sequence belongs to the NAGSA dehydrogenase family. Type 1 subfamily.

Its subcellular location is the cytoplasm. The catalysed reaction is N-acetyl-L-glutamate 5-semialdehyde + phosphate + NADP(+) = N-acetyl-L-glutamyl 5-phosphate + NADPH + H(+). It participates in amino-acid biosynthesis; L-arginine biosynthesis; N(2)-acetyl-L-ornithine from L-glutamate: step 3/4. In terms of biological role, catalyzes the NADPH-dependent reduction of N-acetyl-5-glutamyl phosphate to yield N-acetyl-L-glutamate 5-semialdehyde. The polypeptide is N-acetyl-gamma-glutamyl-phosphate reductase (Shewanella sp. (strain MR-4)).